The following is a 317-amino-acid chain: Acetyl-coenzyme A carboxylase carboxyl transferase subunit alpha (317 aa).

One can recognise a CoA carboxyltransferase C-terminal domain in the interval 39 to 293; it reads RLQKKSNDLT…KAVLEKQLHE (255 aa).

The protein belongs to the AccA family. In terms of assembly, acetyl-CoA carboxylase is a heterohexamer composed of biotin carboxyl carrier protein (AccB), biotin carboxylase (AccC) and two subunits each of ACCase subunit alpha (AccA) and ACCase subunit beta (AccD).

The protein resides in the cytoplasm. It catalyses the reaction N(6)-carboxybiotinyl-L-lysyl-[protein] + acetyl-CoA = N(6)-biotinyl-L-lysyl-[protein] + malonyl-CoA. It functions in the pathway lipid metabolism; malonyl-CoA biosynthesis; malonyl-CoA from acetyl-CoA: step 1/1. Component of the acetyl coenzyme A carboxylase (ACC) complex. First, biotin carboxylase catalyzes the carboxylation of biotin on its carrier protein (BCCP) and then the CO(2) group is transferred by the carboxyltransferase to acetyl-CoA to form malonyl-CoA. In Neisseria gonorrhoeae (strain NCCP11945), this protein is Acetyl-coenzyme A carboxylase carboxyl transferase subunit alpha.